The primary structure comprises 955 residues: 2-oxoglutarate dehydrogenase E1 component (955 aa).

Belongs to the alpha-ketoglutarate dehydrogenase family. As to quaternary structure, homodimer. Part of the 2-oxoglutarate dehydrogenase (OGDH) complex composed of E1 (2-oxoglutarate dehydrogenase), E2 (dihydrolipoamide succinyltransferase) and E3 (dihydrolipoamide dehydrogenase); the complex contains multiple copies of the three enzymatic components (E1, E2 and E3). Requires thiamine diphosphate as cofactor.

The catalysed reaction is N(6)-[(R)-lipoyl]-L-lysyl-[protein] + 2-oxoglutarate + H(+) = N(6)-[(R)-S(8)-succinyldihydrolipoyl]-L-lysyl-[protein] + CO2. In terms of biological role, E1 component of the 2-oxoglutarate dehydrogenase (OGDH) complex which catalyzes the decarboxylation of 2-oxoglutarate, the first step in the conversion of 2-oxoglutarate to succinyl-CoA and CO(2). In Bacillus anthracis (strain A0248), this protein is 2-oxoglutarate dehydrogenase E1 component.